Here is a 66-residue protein sequence, read N- to C-terminus: Large ribosomal subunit protein uL29 (66 aa).

Belongs to the universal ribosomal protein uL29 family. In terms of assembly, part of the 50S ribosomal subunit.

The chain is Large ribosomal subunit protein uL29 (rpmC) from Bacillus subtilis (strain 168).